Here is a 204-residue protein sequence, read N- to C-terminus: Factor arrest protein 3 (204 aa).

In terms of assembly, component of a complex at least composed of FAR3, FAR7, FAR8, FAR10, FAR11 and VPS64.

It is found in the endoplasmic reticulum. Functionally, participates in the control of the reentry into the cell cycle following pheromone treatment. The chain is Factor arrest protein 3 (FAR3) from Saccharomyces cerevisiae (strain ATCC 204508 / S288c) (Baker's yeast).